The following is a 488-amino-acid chain: MIPVVALVGRPNVGKSTLFNRLTRTRDALVADFPGLTRDRKYGRAFLSGYEFIVVDTGGIDGTEEGIETKMAEQSLAAIEEADVVLFMTDARAGLTAADLSIAQHLRSREKTTFVVANKVDGIDADSACAEFWSLGLGEVYQMAASQGRGVTNMIEYALTPYAEAMGIVRQGEDEVTEEREYTEEEAEAEQKRLQDLPIKLAIIGKPNVGKSTLTNRILGEERVVVFDEPGTTRDSIYIPMEREGREYVIIDTAGVRRRSKVHQVIEKFSVIKTLKAVEDANVVLLIIDAREGIAEQDLGLLGFALNAGRALVIAVNKWDGIDQGIKDRVKSELDRRLGFIDFARIHFISALHGTGVGHLFESIEEAYDSATRRVSTSMLTRIMQMSQDDHQPPLVNGRRVKLKYAHAGGYNPPIVVIHGNQVSKLPDSYKRYMMNYFRRSLKVVGTPIQLRFQEGDNPFENKTEKLTMSQERRRKRAQSHIKDRKTK.

EngA-type G domains follow at residues 3–166 (PVVA…AEAM) and 199–372 (IKLA…DSAT). GTP contacts are provided by residues 9–16 (GRPNVGKS), 56–60 (DTGGI), 118–121 (NKVD), 205–212 (GKPNVGKS), 252–256 (DTAGV), and 317–320 (NKWD). The 85-residue stretch at 373 to 457 (RRVSTSMLTR…PIQLRFQEGD (85 aa)) folds into the KH-like domain. The tract at residues 460–488 (FENKTEKLTMSQERRRKRAQSHIKDRKTK) is disordered. The span at 473-488 (RRRKRAQSHIKDRKTK) shows a compositional bias: basic residues.

Belongs to the TRAFAC class TrmE-Era-EngA-EngB-Septin-like GTPase superfamily. EngA (Der) GTPase family. As to quaternary structure, associates with the 50S ribosomal subunit.

In terms of biological role, GTPase that plays an essential role in the late steps of ribosome biogenesis. The protein is GTPase Der of Shewanella baltica (strain OS155 / ATCC BAA-1091).